Reading from the N-terminus, the 375-residue chain is Queuine tRNA-ribosyltransferase (375 aa).

Aspartate 90 serves as the catalytic Proton acceptor. Residues 90–94, aspartate 144, glutamine 190, and glycine 217 each bind substrate; that span reads DSGGF. Residues 248-254 are RNA binding; it reads GIGTPHY. The active-site Nucleophile is aspartate 267. Residues 272–276 are RNA binding; important for wobble base 34 recognition; sequence TRIAR. Zn(2+) contacts are provided by cysteine 305, cysteine 307, cysteine 310, and histidine 336.

It belongs to the queuine tRNA-ribosyltransferase family. Homodimer. Within each dimer, one monomer is responsible for RNA recognition and catalysis, while the other monomer binds to the replacement base PreQ1. It depends on Zn(2+) as a cofactor.

The catalysed reaction is 7-aminomethyl-7-carbaguanine + guanosine(34) in tRNA = 7-aminomethyl-7-carbaguanosine(34) in tRNA + guanine. It functions in the pathway tRNA modification; tRNA-queuosine biosynthesis. Functionally, catalyzes the base-exchange of a guanine (G) residue with the queuine precursor 7-aminomethyl-7-deazaguanine (PreQ1) at position 34 (anticodon wobble position) in tRNAs with GU(N) anticodons (tRNA-Asp, -Asn, -His and -Tyr). Catalysis occurs through a double-displacement mechanism. The nucleophile active site attacks the C1' of nucleotide 34 to detach the guanine base from the RNA, forming a covalent enzyme-RNA intermediate. The proton acceptor active site deprotonates the incoming PreQ1, allowing a nucleophilic attack on the C1' of the ribose to form the product. After dissociation, two additional enzymatic reactions on the tRNA convert PreQ1 to queuine (Q), resulting in the hypermodified nucleoside queuosine (7-(((4,5-cis-dihydroxy-2-cyclopenten-1-yl)amino)methyl)-7-deazaguanosine). The polypeptide is Queuine tRNA-ribosyltransferase (Borrelia hermsii (strain HS1 / DAH)).